The sequence spans 400 residues: Phosphoglycerate kinase (400 aa).

Substrate-binding positions include 19-21, Arg-38, 61-64, Arg-124, and Arg-161; these read DLN and HLGR. Residues Lys-211, Gly-299, Glu-330, and 356–359 each bind ATP; that span reads GGDS.

This sequence belongs to the phosphoglycerate kinase family. Monomer.

The protein resides in the cytoplasm. The catalysed reaction is (2R)-3-phosphoglycerate + ATP = (2R)-3-phospho-glyceroyl phosphate + ADP. It participates in carbohydrate degradation; glycolysis; pyruvate from D-glyceraldehyde 3-phosphate: step 2/5. This Parafrankia sp. (strain EAN1pec) protein is Phosphoglycerate kinase.